The sequence spans 773 residues: Molybdenum cofactor sulfurase (773 aa).

An N6-(pyridoxal phosphate)lysine modification is found at lysine 243. Cysteine 410 is a catalytic residue. The MOSC domain occupies 632-773 (LRLLRQSGQR…LSCGDTVLVE (142 aa)). Serine 731 bears the Phosphoserine mark.

It belongs to the class-V pyridoxal-phosphate-dependent aminotransferase family. MOCOS subfamily. The cofactor is pyridoxal 5'-phosphate.

The enzyme catalyses Mo-molybdopterin + L-cysteine + AH2 = thio-Mo-molybdopterin + L-alanine + A + H2O. It functions in the pathway cofactor biosynthesis; molybdopterin biosynthesis. Sulfurates the molybdenum cofactor. Sulfation of molybdenum is essential for xanthine dehydrogenase (XDH) and aldehyde oxidase (ADO) enzymes in which molybdenum cofactor is liganded by 1 oxygen and 1 sulfur atom in active form. The polypeptide is Molybdenum cofactor sulfurase (Drosophila ananassae (Fruit fly)).